A 379-amino-acid polypeptide reads, in one-letter code: ATP-sensitive inward rectifier potassium channel 10 (379 aa).

Residues 1-61 (MTSVAKVYYS…LKDLWTTFID (61 aa)) are Cytoplasmic-facing. Arginine 36 is a 1,2-dioctanoyl-sn-glycero-3-phospho-(1D-myo-inositol-4,5-bisphosphate) binding site. Residues 62–88 (MQWRYKLLLFSATFAGTWFLFGVVWYL) form a helical membrane-spanning segment. Topologically, residues 89–114 (VAVAHGDLLELGPPANHTPCVVQVHT) are extracellular. Cysteine 108 and cysteine 140 are disulfide-bonded. An intramembrane region (discontinuously helical; Pore-forming) is located at residues 115–131 (LTGAFLFSLESQTTIGY). Positions 128-133 (TIGYGF) match the Selectivity filter motif. Residues 132–140 (GFRYISEEC) are Extracellular-facing. The chain crosses the membrane as a helical span at residues 141–166 (PLAIVLLIAQLVLTTILEIFITGTFL). The Cytoplasmic portion of the chain corresponds to 167 to 379 (AKIARPKKRA…SALSVRISNV (213 aa)). 1,2-dioctanoyl-sn-glycero-3-phospho-(1D-myo-inositol-4,5-bisphosphate) is bound by residues lysine 168, arginine 171, and lysine 173. 210 to 217 (GCQVTGKL) contributes to the ATP binding site.

Belongs to the inward rectifier-type potassium channel (TC 1.A.2.1) family. KCNJ10 subfamily. As to quaternary structure, homotetramer. In kidney cells, it forms heteromeric channels with Kir5.1/KCNJ16; this interaction is required for KCNJ16 localization to the basolateral membrane. Interacts with MAGI1, alone and possibly as a heteromer with KCNJ16; this interaction may facilitate KCNJ10/KCNJ16 potassium channel expression at the basolateral membrane in kidney cells. Interacts with PATJ. As to expression, predominantly expressed in the brain, including in glial cells of the cerebellum and forebrain. Expressed at lower levels in the kidney, and other peripheral tissues.

Its subcellular location is the membrane. The protein resides in the basolateral cell membrane. The enzyme catalyses K(+)(in) = K(+)(out). With respect to regulation, channel activity is strongly regulated by variations of cytosolic pH; channels are activated by alkaline and inhibited by acidic pH values. Activated by phosphatidylinositol 4,5 biphosphate (PtdIns(4,5)P2). Inhibited by Ba(2+) and Cs(+). Functionally, may be responsible for potassium buffering action of glial cells in the brain. Inward rectifier potassium channels are characterized by a greater tendency to allow potassium to flow into the cell rather than out of it. Their voltage dependence is regulated by the concentration of extracellular potassium; as external potassium is raised, the voltage range of the channel opening shifts to more positive voltages. The inward rectification is mainly due to the blockage of outward current by internal magnesium. Can be blocked by extracellular barium and cesium. In the kidney, together with KCNJ16, mediates basolateral K(+) recycling in distal tubules; this process is critical for Na(+) reabsorption at the tubules. The protein is ATP-sensitive inward rectifier potassium channel 10 of Rattus norvegicus (Rat).